We begin with the raw amino-acid sequence, 157 residues long: Fimbrial protein Q (157 aa).

Residues 1-6 (MNAQKG) constitute a propeptide that is removed on maturation. F7 carries the N-methylphenylalanine modification. A disulfide bridge links C136 with C155.

The protein belongs to the N-Me-Phe pilin family. The pili are polar flexible filaments of about 5.4 nanometers diameter and 2.5 micrometers average length; they consist of only a single polypeptide chain arranged in a helical configuration of five subunits per turn in the assembled pilus.

It is found in the fimbrium. In Moraxella bovis, this protein is Fimbrial protein Q (tfpQ).